The primary structure comprises 553 residues: Methyl-coenzyme M reductase I subunit alpha (553 aa).

Q150 is a coenzyme F430 binding site. Residues R228, 259–260, and R273 each bind coenzyme B; that span reads KH. R274 is modified (5-methylarginine). Coenzyme M contacts are provided by Y335 and Y447.

It belongs to the methyl-coenzyme M reductase alpha subunit family. As to quaternary structure, MCR is a hexamer of two alpha, two beta, and two gamma chains, forming a dimer of heterotrimers. Coenzyme F430 serves as cofactor. Post-translationally, is methylated on C5 of Arg-274 by the methyltransferase MJ0841. This post-translational methylation, despite being not essential in vivo, plays a role for the stability and structural integrity of MCR.

It is found in the cytoplasm. The enzyme catalyses coenzyme B + methyl-coenzyme M = methane + coenzyme M-coenzyme B heterodisulfide. It functions in the pathway one-carbon metabolism; methyl-coenzyme M reduction; methane from methyl-coenzyme M: step 1/1. In terms of biological role, component of the methyl-coenzyme M reductase (MCR) I that catalyzes the reductive cleavage of methyl-coenzyme M (CoM-S-CH3 or 2-(methylthio)ethanesulfonate) using coenzyme B (CoB or 7-mercaptoheptanoylthreonine phosphate) as reductant which results in the production of methane and the mixed heterodisulfide of CoB and CoM (CoM-S-S-CoB). This is the final step in methanogenesis. In Methanocaldococcus jannaschii (strain ATCC 43067 / DSM 2661 / JAL-1 / JCM 10045 / NBRC 100440) (Methanococcus jannaschii), this protein is Methyl-coenzyme M reductase I subunit alpha (mcrA).